A 379-amino-acid chain; its full sequence is Putative zinc metalloprotease BMEI0829 (379 aa).

Position 33 (His-33) interacts with Zn(2+). Glu-34 is a catalytic residue. Position 37 (His-37) interacts with Zn(2+). A run of 4 helical transmembrane segments spans residues 39 to 61, 122 to 144, 305 to 327, and 355 to 377; these read LVARWCGIGAQAFSIGFGPELLG, VFAGPAFNIILTIAIFSVFFALY, FDWLIQLMAMLSIGIGLLNLFPL, and IFYRIGFLLVMGFMGFVLFNDLF. The region spanning 133 to 208 is the PDZ domain; the sequence is TIAIFSVFFA…LNFTVERDGK (76 aa).

This sequence belongs to the peptidase M50B family. Requires Zn(2+) as cofactor.

It localises to the cell inner membrane. The chain is Putative zinc metalloprotease BMEI0829 from Brucella melitensis biotype 1 (strain ATCC 23456 / CCUG 17765 / NCTC 10094 / 16M).